Consider the following 471-residue polypeptide: UDP-N-acetylmuramate--L-alanine ligase (471 aa).

122–128 is a binding site for ATP; it reads GTHGKTT.

Belongs to the MurCDEF family.

Its subcellular location is the cytoplasm. The enzyme catalyses UDP-N-acetyl-alpha-D-muramate + L-alanine + ATP = UDP-N-acetyl-alpha-D-muramoyl-L-alanine + ADP + phosphate + H(+). The protein operates within cell wall biogenesis; peptidoglycan biosynthesis. Its function is as follows. Cell wall formation. In Cutibacterium acnes (strain DSM 16379 / KPA171202) (Propionibacterium acnes), this protein is UDP-N-acetylmuramate--L-alanine ligase.